Reading from the N-terminus, the 105-residue chain is Large ribosomal subunit protein uL24 (105 aa).

It belongs to the universal ribosomal protein uL24 family. As to quaternary structure, part of the 50S ribosomal subunit.

One of two assembly initiator proteins, it binds directly to the 5'-end of the 23S rRNA, where it nucleates assembly of the 50S subunit. Functionally, one of the proteins that surrounds the polypeptide exit tunnel on the outside of the subunit. The chain is Large ribosomal subunit protein uL24 from Azoarcus sp. (strain BH72).